We begin with the raw amino-acid sequence, 641 residues long: Epithelial sodium channel subunit beta (641 aa).

Residues 1 to 50 lie on the Cytoplasmic side of the membrane; sequence MHLKKYLLKGLHRLQKGPGYSYKELLVWYCNNTNTHGPKRIICEGPKKKA. Residues 51–71 traverse the membrane as a helical segment; it reads MWFLITLLFTSLVCWQWGVFI. Over 72–533 the chain is Extracellular; the sequence is RTYLSWEVSV…GGQFGFWMGG (462 aa). 9 cysteine pairs are disulfide-bonded: Cys-98-Cys-273, Cys-185-Cys-190, Cys-197-Cys-204, Cys-250-Cys-257, Cys-362-Cys-449, Cys-387-Cys-445, Cys-391-Cys-441, Cys-400-Cys-427, and Cys-402-Cys-416. The N-linked (GlcNAc...) asparagine glycan is linked to Asn-141. Asn-261 carries an N-linked (GlcNAc...) asparagine glycan. Residues 534–554 traverse the membrane as a helical segment; the sequence is SVLCLIEFGEILIDFVWITII. Residues 555-641 lie on the Cytoplasmic side of the membrane; the sequence is KLVAFAKSLR…IESDSEGDAI (87 aa). Residues 593–624 form a disordered region; sequence PDVARPGPDPGTYPDEQTLPIPGTPPPNYDSL. A PY motif; recruits WW domain-containing proteins and is thereby required for ubiquitination and inhibition of the channel by NEDD4 and NEDD4L motif is present at residues 617-621; sequence PPPNY. A phosphoserine mark is found at Ser-634 and Ser-636.

The protein belongs to the amiloride-sensitive sodium channel (TC 1.A.6) family. SCNN1B subfamily. Component of the heterotrimeric epithelial sodium channel (ENaC) composed of an alpha/SCNN1A, a beta/SCNN1B and a gamma/SCNN1G subunit. An additional delta/SCNN1D subunit can replace the alpha/SCNN1A subunit to form an alternative channel with specific properties. Interacts with WWP1 (via WW domains). Interacts with WWP2 (via WW domains); inhibits the channel. Interacts with the full-length immature form of PCSK9 (pro-PCSK9). Interacts (N-glycosylated) with BPIFA1; the interaction is direct and inhibits the proteolytic processing of SCNN1A and SCNN1G and the activation of ENaC. Ubiquitinated. Can be ubiquitinated at multiple sites and undergo monoubiquitination and polyubiquitination. Ubiquitination by NEDD4 or NEDD4L inhibits the ENaC channel through endocytosis, intracellular retention and degradation of its individual subunits. However, some studies could not confirm the ubiquitination of this subunit of the ENaC. In terms of processing, phosphorylated on serine and threonine residues. Aldosterone and insulin increase the basal level of phosphorylation. Post-translationally, N-glycosylated. N-glycosylation is required for interaction with BPIFA1.

It is found in the apical cell membrane. Its subcellular location is the cytoplasmic vesicle membrane. The catalysed reaction is Na(+)(in) = Na(+)(out). Its activity is regulated as follows. Originally identified and characterized by its inhibition by the diuretic drug amiloride. In terms of biological role, this is one of the three pore-forming subunits of the heterotrimeric epithelial sodium channel (ENaC), a critical regulator of sodium balance and fluid homeostasis. ENaC operates in epithelial tissues, where it mediates the electrodiffusion of sodium ions from extracellular fluid through the apical membrane of cells, with water following osmotically. It plays a key role in maintaining sodium homeostasis through electrogenic sodium reabsorption in the kidneys. Additionally, ENaC is essential for airway surface liquid homeostasis, which is crucial for proper mucus clearance. The polypeptide is Epithelial sodium channel subunit beta (Canis lupus familiaris (Dog)).